The chain runs to 248 residues: Triosephosphate isomerase (248 aa).

9 to 11 (NWK) contacts substrate. Catalysis depends on His-92, which acts as the Electrophile. Catalysis depends on Glu-164, which acts as the Proton acceptor. Residues Gly-170, Ser-210, and 231–232 (GG) each bind substrate.

Belongs to the triosephosphate isomerase family. As to quaternary structure, homodimer.

It localises to the cytoplasm. The catalysed reaction is D-glyceraldehyde 3-phosphate = dihydroxyacetone phosphate. It participates in carbohydrate biosynthesis; gluconeogenesis. It functions in the pathway carbohydrate degradation; glycolysis; D-glyceraldehyde 3-phosphate from glycerone phosphate: step 1/1. In terms of biological role, involved in the gluconeogenesis. Catalyzes stereospecifically the conversion of dihydroxyacetone phosphate (DHAP) to D-glyceraldehyde-3-phosphate (G3P). The chain is Triosephosphate isomerase from Mycoplasma capricolum subsp. capricolum (strain California kid / ATCC 27343 / NCTC 10154).